Reading from the N-terminus, the 605-residue chain is DNA mismatch repair protein MutL (605 aa).

This sequence belongs to the DNA mismatch repair MutL/HexB family.

Its function is as follows. This protein is involved in the repair of mismatches in DNA. It is required for dam-dependent methyl-directed DNA mismatch repair. May act as a 'molecular matchmaker', a protein that promotes the formation of a stable complex between two or more DNA-binding proteins in an ATP-dependent manner without itself being part of a final effector complex. This is DNA mismatch repair protein MutL from Rhizobium meliloti (strain 1021) (Ensifer meliloti).